We begin with the raw amino-acid sequence, 274 residues long: 16S rRNA (guanine(1405)-N(7))-methyltransferase (274 aa).

S-adenosyl-L-methionine-binding positions include phenylalanine 64, 102-104, arginine 108, alanine 133, aspartate 156, 182-183, leucine 198, and glutamine 207; these read HVS and DL.

Belongs to the methyltransferase superfamily. Aminoglycoside resistance family.

It catalyses the reaction guanosine(1405) in 16S rRNA + S-adenosyl-L-methionine = N(7)-methylguanosine(1405) in 16S rRNA + S-adenosyl-L-homocysteine. Functionally, specifically methylates the N(7) position of guanine 1405 in 16S rRNA. Confers resistance to various aminoglycosides, including gentamicin and kanamycin. This Micromonospora echinospora (Micromonospora purpurea) protein is 16S rRNA (guanine(1405)-N(7))-methyltransferase (grm).